A 398-amino-acid chain; its full sequence is Cysteine protease ATG4A (398 aa).

Cysteine 77 serves as the catalytic Nucleophile. Residues aspartate 279 and histidine 281 contribute to the active site. The LIR signature appears at 393-396; sequence FEIL.

Belongs to the peptidase C54 family. In terms of assembly, interacts with ATG9A; the interaction is direct.

It is found in the cytoplasm. The catalysed reaction is [protein]-C-terminal L-amino acid-glycyl-phosphatidylethanolamide + H2O = [protein]-C-terminal L-amino acid-glycine + a 1,2-diacyl-sn-glycero-3-phosphoethanolamine. Inhibited by N-ethylmaleimide. Redox-regulated during autophagy since reducing conditions activate ATG4A whereas an oxidizing environment such as the presence of H(2)O(2) inhibits its activity. Its function is as follows. Cysteine protease that plays a key role in autophagy by mediating both proteolytic activation and delipidation of ATG8 family proteins. The protease activity is required for proteolytic activation of ATG8 family proteins: cleaves the C-terminal amino acid of ATG8 proteins to reveal a C-terminal glycine. Exposure of the glycine at the C-terminus is essential for ATG8 proteins conjugation to phosphatidylethanolamine (PE) and insertion to membranes, which is necessary for autophagy. Preferred substrate is GABARAPL2 followed by MAP1LC3A and GABARAP. Protease activity is also required to counteract formation of high-molecular weight conjugates of ATG8 proteins (ATG8ylation): acts as a deubiquitinating-like enzyme that removes ATG8 conjugated to other proteins, such as ATG3. In addition to the protease activity, also mediates delipidation of ATG8 family proteins. Catalyzes delipidation of PE-conjugated forms of ATG8 proteins during macroautophagy. Compared to ATG4B, the major protein for proteolytic activation of ATG8 proteins, shows weaker ability to cleave the C-terminal amino acid of ATG8 proteins, while it displays stronger delipidation activity. Involved in phagophore growth during mitophagy independently of its protease activity and of ATG8 proteins: acts by regulating ATG9A trafficking to mitochondria and promoting phagophore-endoplasmic reticulum contacts during the lipid transfer phase of mitophagy. This Pongo abelii (Sumatran orangutan) protein is Cysteine protease ATG4A.